The following is a 272-amino-acid chain: NH(3)-dependent NAD(+) synthetase (272 aa).

Position 45–52 (45–52 (GISGGQDS)) interacts with ATP. Aspartate 51 lines the Mg(2+) pocket. Arginine 138 is a deamido-NAD(+) binding site. Threonine 158 is a binding site for ATP. Position 163 (glutamate 163) interacts with Mg(2+). Residues lysine 171 and aspartate 178 each contribute to the deamido-NAD(+) site. Positions 187 and 209 each coordinate ATP. 258–259 (HK) is a binding site for deamido-NAD(+).

This sequence belongs to the NAD synthetase family. In terms of assembly, homodimer.

It carries out the reaction deamido-NAD(+) + NH4(+) + ATP = AMP + diphosphate + NAD(+) + H(+). The protein operates within cofactor biosynthesis; NAD(+) biosynthesis; NAD(+) from deamido-NAD(+) (ammonia route): step 1/1. Its function is as follows. Catalyzes the ATP-dependent amidation of deamido-NAD to form NAD. Uses ammonia as a nitrogen source. In Bacillus velezensis (strain DSM 23117 / BGSC 10A6 / LMG 26770 / FZB42) (Bacillus amyloliquefaciens subsp. plantarum), this protein is NH(3)-dependent NAD(+) synthetase.